The sequence spans 518 residues: ATP synthase subunit alpha (518 aa).

Position 169 to 176 (Gly169 to Thr176) interacts with ATP.

It belongs to the ATPase alpha/beta chains family. As to quaternary structure, F-type ATPases have 2 components, CF(1) - the catalytic core - and CF(0) - the membrane proton channel. CF(1) has five subunits: alpha(3), beta(3), gamma(1), delta(1), epsilon(1). CF(0) has three main subunits: a(1), b(2) and c(9-12). The alpha and beta chains form an alternating ring which encloses part of the gamma chain. CF(1) is attached to CF(0) by a central stalk formed by the gamma and epsilon chains, while a peripheral stalk is formed by the delta and b chains.

It localises to the cell membrane. The catalysed reaction is ATP + H2O + 4 H(+)(in) = ADP + phosphate + 5 H(+)(out). In terms of biological role, produces ATP from ADP in the presence of a proton gradient across the membrane. The alpha chain is a regulatory subunit. The polypeptide is ATP synthase subunit alpha (Enterococcus hirae (strain ATCC 9790 / DSM 20160 / JCM 8729 / LMG 6399 / NBRC 3181 / NCIMB 6459 / NCDO 1258 / NCTC 12367 / WDCM 00089 / R)).